Reading from the N-terminus, the 339-residue chain is Dihydroorotate dehydrogenase (quinone) (339 aa).

Residues 62–66 and Thr-86 each bind FMN; that span reads AGLDK. Lys-66 lines the substrate pocket. 111 to 115 is a binding site for substrate; sequence NRMGF. FMN contacts are provided by Asn-139 and Asn-172. Residue Asn-172 coordinates substrate. Ser-175 functions as the Nucleophile in the catalytic mechanism. Asn-177 provides a ligand contact to substrate. Positions 217 and 245 each coordinate FMN. Substrate is bound at residue 246–247; that stretch reads NT. Residues Gly-268, Gly-297, and 318–319 each bind FMN; that span reads YS.

Belongs to the dihydroorotate dehydrogenase family. Type 2 subfamily. Monomer. FMN serves as cofactor.

It localises to the cell membrane. It catalyses the reaction (S)-dihydroorotate + a quinone = orotate + a quinol. Its pathway is pyrimidine metabolism; UMP biosynthesis via de novo pathway; orotate from (S)-dihydroorotate (quinone route): step 1/1. In terms of biological role, catalyzes the conversion of dihydroorotate to orotate with quinone as electron acceptor. In Shewanella denitrificans (strain OS217 / ATCC BAA-1090 / DSM 15013), this protein is Dihydroorotate dehydrogenase (quinone).